We begin with the raw amino-acid sequence, 72 residues long: DNA-directed RNA polymerase subunit omega (72 aa).

It belongs to the RNA polymerase subunit omega family. As to quaternary structure, the RNAP catalytic core consists of 2 alpha, 1 beta, 1 beta' and 1 omega subunit. When a sigma factor is associated with the core the holoenzyme is formed, which can initiate transcription.

It catalyses the reaction RNA(n) + a ribonucleoside 5'-triphosphate = RNA(n+1) + diphosphate. In terms of biological role, promotes RNA polymerase assembly. Latches the N- and C-terminal regions of the beta' subunit thereby facilitating its interaction with the beta and alpha subunits. The chain is DNA-directed RNA polymerase subunit omega from Petrotoga mobilis (strain DSM 10674 / SJ95).